The following is a 306-amino-acid chain: MNTLGHQYDNSLVSNAFGFLRLPLNFMPYDSDAEWVITGIPFDMATSGRSGSRFGPAAIRQVSTNLAWEGNRFPWNFDMRKRLNVVDCGDLVYAFGDAREMSEKLQAHAEKLLAAGKRMLSFGGDHFVTLPLLRAHAKHFGKMALVHFDAHTDTYANGCEFDHGTMFYTAPNEGLIDPTRSVQIGIRTEFDKDNGFTVLDAPQVNDRTVDDVVAQVKQIVGDMPVYLTFDIDCLDPAFAPGTGTPVIGGLTSDRALKLLRGIQDLNIVGMDIVEVAPAYDQSDITALAAATLALEMLYIQAAKKGE.

The Mn(2+) site is built by His126, Asp149, His151, Asp153, Asp230, and Asp232.

It belongs to the arginase family. Agmatinase subfamily. Mn(2+) serves as cofactor.

The enzyme catalyses agmatine + H2O = urea + putrescine. It functions in the pathway amine and polyamine biosynthesis; putrescine biosynthesis via agmatine pathway; putrescine from agmatine: step 1/1. Catalyzes the formation of putrescine from agmatine. The sequence is that of Agmatinase from Cronobacter sakazakii (strain ATCC BAA-894) (Enterobacter sakazakii).